We begin with the raw amino-acid sequence, 429 residues long: 3-phosphoshikimate 1-carboxyvinyltransferase (429 aa).

3-phosphoshikimate contacts are provided by Lys23, Ser24, and Arg28. Lys23 lines the phosphoenolpyruvate pocket. Positions 95 and 123 each coordinate phosphoenolpyruvate. 3-phosphoshikimate-binding residues include Ser168, Gln170, Asp316, and Lys343. Gln170 provides a ligand contact to phosphoenolpyruvate. Asp316 acts as the Proton acceptor in catalysis. Positions 347 and 389 each coordinate phosphoenolpyruvate.

The protein belongs to the EPSP synthase family. In terms of assembly, monomer.

The protein resides in the cytoplasm. The enzyme catalyses 3-phosphoshikimate + phosphoenolpyruvate = 5-O-(1-carboxyvinyl)-3-phosphoshikimate + phosphate. It participates in metabolic intermediate biosynthesis; chorismate biosynthesis; chorismate from D-erythrose 4-phosphate and phosphoenolpyruvate: step 6/7. Functionally, catalyzes the transfer of the enolpyruvyl moiety of phosphoenolpyruvate (PEP) to the 5-hydroxyl of shikimate-3-phosphate (S3P) to produce enolpyruvyl shikimate-3-phosphate and inorganic phosphate. The protein is 3-phosphoshikimate 1-carboxyvinyltransferase of Bacillus cereus (strain ATCC 10987 / NRS 248).